The primary structure comprises 470 residues: UDP-glycosyltransferase 75C1 (470 aa).

The active-site Proton acceptor is the H16. H16 is a binding site for an anthocyanidin. Residues Q347, H362, W365, N366, S367, E370, D386, and Q387 each coordinate UDP-alpha-D-glucose.

It belongs to the UDP-glycosyltransferase family. As to expression, expressed in flowers and fruits, especially in pulp, and, at lower levels, in seeds.

It localises to the cytoplasm. Its subcellular location is the nucleus. It catalyses the reaction 2-cis-(+)-abscisate + UDP-alpha-D-glucose = beta-D-glucopyranosyl cis-(+)-abscisate + UDP. It carries out the reaction (indol-3-yl)acetate + UDP-alpha-D-glucose = 1-O-(indol-3-ylacetyl)-beta-D-glucose + UDP. Its function is as follows. Glucosyltransferase acting on both abscisic acid (ABA) and auxin (IAA). Required for ABA-mediated fruit ripening, seed germination, and negative responses to drought. In Solanum lycopersicum (Tomato), this protein is UDP-glycosyltransferase 75C1.